The sequence spans 1325 residues: uncharacterized protein (1325 aa).

The signal sequence occupies residues 1–27 (MHTFTRKVKWPFMFTAIGLTFGIVAVA). A lipid anchor (N-palmitoyl cysteine) is attached at Cys-28. Cys-28 carries the S-diacylglycerol cysteine lipid modification. 2 disordered regions span residues 379 to 402 (RAAS…GTTQ) and 430 to 464 (NTNA…TGNS). Over residues 436-448 (TGGGGSGGGGGTS) the composition is skewed to gly residues. Over residues 449-464 (TGSSTGSSTETTTGNS) the composition is skewed to low complexity.

It belongs to the MG307/MG309/MG338 family.

It localises to the cell membrane. This is an uncharacterized protein from Mycoplasma pneumoniae (strain ATCC 29342 / M129 / Subtype 1) (Mycoplasmoides pneumoniae).